The chain runs to 624 residues: Acidic juvenile hormone-suppressible protein 1 (624 aa).

Positions 1-18 (MARLVLCALALLVAGGLA) are cleaved as a signal peptide. N-linked (GlcNAc...) asparagine glycosylation is found at N75 and N478.

This sequence belongs to the hemocyanin family.

It localises to the secreted. It is found in the extracellular space. The protein is Acidic juvenile hormone-suppressible protein 1 (AJSP-1) of Trichoplusia ni (Cabbage looper).